We begin with the raw amino-acid sequence, 437 residues long: Protein farnesyltransferase subunit beta (437 aa).

PFTB repeat units follow at residues 123–164, 174–215, 222–263, 270–312, and 332–374; these read ATDV…CIIG, REKL…SLTN, FEGT…VILK, LKSL…PLLH, and QQAL…SIAQ. Residues 248–251 and 291–294 contribute to the (2E,6E)-farnesyl diphosphate site; these read HGGY and RCNK. Zn(2+)-binding residues include Asp297 and Cys299. 300–303 contacts (2E,6E)-farnesyl diphosphate; the sequence is YSFW. His362 lines the Zn(2+) pocket. Residue Ser432 is modified to Phosphoserine. Phosphothreonine is present on Thr436.

The protein belongs to the protein prenyltransferase subunit beta family. Heterodimer of FNTA and FNTB. Requires Zn(2+) as cofactor.

It carries out the reaction L-cysteinyl-[protein] + (2E,6E)-farnesyl diphosphate = S-(2E,6E)-farnesyl-L-cysteinyl-[protein] + diphosphate. In terms of biological role, essential subunit of the farnesyltransferase complex. Catalyzes the transfer of a farnesyl moiety from farnesyl diphosphate to a cysteine at the fourth position from the C-terminus of several proteins having the C-terminal sequence Cys-aliphatic-aliphatic-X. This Mus musculus (Mouse) protein is Protein farnesyltransferase subunit beta (Fntb).